A 518-amino-acid polypeptide reads, in one-letter code: Putative BTB/POZ domain and WD-repeat protein R731 (518 aa).

Residues 22-92 (TDCQLHLTDS…FYGFPLEEPN (71 aa)) form the BTB domain. Residues 224-246 (NHEESSDDEVNDDEDTDNEDTDD) are disordered. Residues 228–246 (SSDDEVNDDEDTDNEDTDD) show a composition bias toward acidic residues. WD repeat units lie at residues 391–430 (NHSTTINHILYSPKSKYFIFCDENSIIYVYSTKDNYSLIK) and 437–475 (FLKFGVKDFEFMTSKIIVAIDIKGKICIWNIETEQIIQN).

The protein belongs to the mimivirus BTB/WD family.

This Acanthamoeba polyphaga (Amoeba) protein is Putative BTB/POZ domain and WD-repeat protein R731.